A 681-amino-acid chain; its full sequence is DNA ligase (681 aa).

Residues 35–39 (DAEYD), 84–85 (SL), and Glu115 contribute to the NAD(+) site. Lys117 serves as the catalytic N6-AMP-lysine intermediate. The NAD(+) site is built by Arg138, Glu175, Lys293, and Lys317. Zn(2+)-binding residues include Cys411, Cys414, Cys429, and Cys435. One can recognise a BRCT domain in the interval 598–681 (RTNLAVPGKT…SLLRDTSSSE (84 aa)).

Belongs to the NAD-dependent DNA ligase family. LigA subfamily. It depends on Mg(2+) as a cofactor. Mn(2+) serves as cofactor.

It carries out the reaction NAD(+) + (deoxyribonucleotide)n-3'-hydroxyl + 5'-phospho-(deoxyribonucleotide)m = (deoxyribonucleotide)n+m + AMP + beta-nicotinamide D-nucleotide.. DNA ligase that catalyzes the formation of phosphodiester linkages between 5'-phosphoryl and 3'-hydroxyl groups in double-stranded DNA using NAD as a coenzyme and as the energy source for the reaction. It is essential for DNA replication and repair of damaged DNA. The protein is DNA ligase of Nitrosomonas europaea (strain ATCC 19718 / CIP 103999 / KCTC 2705 / NBRC 14298).